A 217-amino-acid polypeptide reads, in one-letter code: Somatotropin (217 aa).

Residues 1–26 (MMAAGPRTSLLLAFALLCLPWTQVVG) form the signal peptide. Residue H46 participates in Zn(2+) binding. A disulfide bridge links C79 with C190. The residue at position 132 (S132) is a Phosphoserine. E199 is a Zn(2+) binding site. C207 and C215 form a disulfide bridge.

Belongs to the somatotropin/prolactin family.

It localises to the secreted. Plays an important role in growth control. Its major role in stimulating body growth is to stimulate the liver and other tissues to secrete IGF1. It stimulates both the differentiation and proliferation of myoblasts. It also stimulates amino acid uptake and protein synthesis in muscle and other tissues. This is Somatotropin (GH1) from Bos taurus (Bovine).